Consider the following 99-residue polypeptide: Protein adenylyltransferase MntA (99 aa).

A GSX(10)DXD motif motif is present at residues 33–47; sequence GSYVRGEAKEDSDVD. Catalysis depends on residues aspartate 45 and aspartate 47. Residues aspartate 45, aspartate 47, and aspartate 77 each coordinate Mg(2+).

The protein belongs to the MntA antitoxin family. The cofactor is Mg(2+).

It catalyses the reaction L-tyrosyl-[protein] + ATP = O-(5'-adenylyl)-L-tyrosyl-[protein] + diphosphate. It carries out the reaction O-(5'-adenylyl)-L-tyrosyl-[protein] + ATP = O-[5'-(adenylyl-(5'-&gt;3')-adenylyl)]-L-tyrosyl-[protein] + diphosphate. Functionally, antitoxin component of a type VII toxin-antitoxin (TA) system. Overexpression in E.coli neutralizes the toxic effect of cognate toxin HepT. Neutralization is mostly due to AMPylation of the toxin by this enzyme. The sequence is that of Protein adenylyltransferase MntA from Thermococcus cleftensis (strain DSM 27260 / KACC 17922 / CL1).